A 252-amino-acid chain; its full sequence is uncharacterized protein (252 aa).

Phosphoserine is present on residues S195 and S209.

Testis-specific. Highly expressed in spermatocytes (at protein level).

Its function is as follows. Essential for normal spermatogenesis and male fertility. This is an uncharacterized protein from Mus musculus (Mouse).